The sequence spans 204 residues: tRNA (guanine-N(7)-)-methyltransferase (204 aa).

S-adenosyl-L-methionine is bound by residues Glu-36, Glu-61, and Asp-111. Asp-111 is an active-site residue. Substrate contacts are provided by residues Lys-115, Asp-147, and 177–180 (TRFE).

This sequence belongs to the class I-like SAM-binding methyltransferase superfamily. TrmB family.

It catalyses the reaction guanosine(46) in tRNA + S-adenosyl-L-methionine = N(7)-methylguanosine(46) in tRNA + S-adenosyl-L-homocysteine. Its pathway is tRNA modification; N(7)-methylguanine-tRNA biosynthesis. Functionally, catalyzes the formation of N(7)-methylguanine at position 46 (m7G46) in tRNA. The chain is tRNA (guanine-N(7)-)-methyltransferase from Chlorobium phaeobacteroides (strain DSM 266 / SMG 266 / 2430).